A 721-amino-acid polypeptide reads, in one-letter code: Choline O-acetyltransferase (721 aa).

H419 acts as the Proton acceptor in catalysis. CoA is bound by residues 496–508 (GKTFIKSCQVSPD), S534, and Q656.

Belongs to the carnitine/choline acetyltransferase family. As to quaternary structure, the 54 kDa and 13 kDa chains exist as a heterodimer. The N-terminus of choline O-acetyltransferase 67 kDa and 54 kDa chains are blocked.

It catalyses the reaction choline + acetyl-CoA = acetylcholine + CoA. Its function is as follows. Catalyzes the reversible synthesis of acetylcholine (ACh) from acetyl CoA and choline at cholinergic synapses. The protein is Choline O-acetyltransferase of Drosophila melanogaster (Fruit fly).